Here is a 689-residue protein sequence, read N- to C-terminus: Methionine--tRNA ligase (689 aa).

The short motif at 15–25 is the 'HIGH' region element; that stretch reads PYANGPIHLGH. The Zn(2+) site is built by Cys146, Cys149, Cys159, and Cys162. The 'KMSKS' region motif lies at 332 to 336; the sequence is KMSKS. Position 335 (Lys335) interacts with ATP. In terms of domain architecture, tRNA-binding spans 588–689; that stretch reads DFAKIDLRIA…EGAQPGMRVK (102 aa).

This sequence belongs to the class-I aminoacyl-tRNA synthetase family. MetG type 1 subfamily. Homodimer. Zn(2+) serves as cofactor.

The protein resides in the cytoplasm. It carries out the reaction tRNA(Met) + L-methionine + ATP = L-methionyl-tRNA(Met) + AMP + diphosphate. Functionally, is required not only for elongation of protein synthesis but also for the initiation of all mRNA translation through initiator tRNA(fMet) aminoacylation. This Shewanella baltica (strain OS223) protein is Methionine--tRNA ligase.